The sequence spans 218 residues: Small ribosomal subunit protein uS3c (218 aa).

The 76-residue stretch at I43–G118 folds into the KH type-2 domain.

It belongs to the universal ribosomal protein uS3 family. In terms of assembly, part of the 30S ribosomal subunit.

It localises to the plastid. The protein resides in the chloroplast. The chain is Small ribosomal subunit protein uS3c (rps3) from Gossypium barbadense (Sea Island cotton).